The primary structure comprises 406 residues: Renin (406 aa).

The N-terminal stretch at 1–23 (MDGWRRMPRWGLLLLLWGSCTFG) is a signal peptide. The propeptide at 24–66 (LPTDTTTFKRIFLKRMPSIRESLKERGVDMARLGPEWSQPMKR) is activation peptide. Asparagine 71 carries an N-linked (GlcNAc...) asparagine glycan. One can recognise a Peptidase A1 domain in the interval 86-403 (YYGEIGIGTP…DRRNNRIGFA (318 aa)). Aspartate 104 is a catalytic residue. Cysteine 117 and cysteine 124 are joined by a disulfide. N-linked (GlcNAc...) asparagine glycosylation is present at asparagine 141. The cysteines at positions 283 and 287 are disulfide-linked. Aspartate 292 is a catalytic residue. Cysteines 325 and 362 form a disulfide.

It belongs to the peptidase A1 family. Interacts with ATP6AP2.

It is found in the secreted. Its subcellular location is the membrane. It catalyses the reaction Cleavage of Leu-|-Xaa bond in angiotensinogen to generate angiotensin I.. With respect to regulation, interaction with ATP6AP2 results in a 5-fold increased efficiency in angiotensinogen processing. Its function is as follows. Renin is a highly specific endopeptidase, whose only known function is to generate angiotensin I from angiotensinogen in the plasma, initiating a cascade of reactions that produce an elevation of blood pressure and increased sodium retention by the kidney. The sequence is that of Renin (REN) from Homo sapiens (Human).